The following is a 117-amino-acid chain: Modulator protein MzrA (117 aa).

The Cytoplasmic segment spans residues 1–9; sequence MNSPGLRKP. Residues 10 to 29 traverse the membrane as a helical segment; that stretch reads TIWRPLLLLFPLLALLLSMS. Over 30 to 117 the chain is Periplasmic; the sequence is SPRLPDEVML…THGTIRVARS (88 aa).

This sequence belongs to the MzrA family. As to quaternary structure, interacts with EnvZ.

Its subcellular location is the cell inner membrane. Its function is as follows. Modulates the activity of the EnvZ/OmpR two-component regulatory system, probably by directly modulating EnvZ enzymatic activity and increasing stability of phosphorylated OmpR. In Dickeya zeae (strain Ech586) (Dickeya dadantii (strain Ech586)), this protein is Modulator protein MzrA.